We begin with the raw amino-acid sequence, 170 residues long: Large ribosomal subunit protein bL9 (170 aa).

Positions 149-170 (RTEEADAEESAAEEPAVEEAAE) are disordered. Over residues 153–170 (ADAEESAAEEPAVEEAAE) the composition is skewed to acidic residues.

This sequence belongs to the bacterial ribosomal protein bL9 family.

Binds to the 23S rRNA. This is Large ribosomal subunit protein bL9 from Oleidesulfovibrio alaskensis (strain ATCC BAA-1058 / DSM 17464 / G20) (Desulfovibrio alaskensis).